Here is an 81-residue protein sequence, read N- to C-terminus: Toxin TdNa10 (81 aa).

Positions 1-20 (MWTFAIVLAFLLIGLDEGEA) are cleaved as a signal peptide. Residues 21–81 (LDGYPLSKNN…KMYPGELPCH (61 aa)) form the LCN-type CS-alpha/beta domain. 4 disulfides stabilise this stretch: cysteine 32-cysteine 80, cysteine 36-cysteine 57, cysteine 42-cysteine 62, and cysteine 46-cysteine 64.

It belongs to the long (4 C-C) scorpion toxin superfamily. Sodium channel inhibitor family. Beta subfamily. Expressed by the venom gland.

Its subcellular location is the secreted. Functionally, alpha toxins bind voltage-independently at site-3 of sodium channels (Nav) and inhibit the inactivation of the activated channels, thereby blocking neuronal transmission. This toxin binds, in vitro, to sodium channels and inhibits the inactivation of the activated channels. Seems not toxic to mice, crickets and sweet-water shrimps. This Tityus discrepans (Venezuelan scorpion) protein is Toxin TdNa10.